The following is a 185-amino-acid chain: Ribosome-recycling factor (185 aa).

Belongs to the RRF family.

The protein resides in the cytoplasm. Functionally, responsible for the release of ribosomes from messenger RNA at the termination of protein biosynthesis. May increase the efficiency of translation by recycling ribosomes from one round of translation to another. The chain is Ribosome-recycling factor from Clavibacter sepedonicus (Clavibacter michiganensis subsp. sepedonicus).